A 163-amino-acid chain; its full sequence is Nucleotide-binding protein BSU11020 (163 aa).

Belongs to the YajQ family.

Functionally, nucleotide-binding protein. This is Nucleotide-binding protein BSU11020 (yitK) from Bacillus subtilis (strain 168).